The primary structure comprises 351 residues: 3-dehydroquinate synthase (351 aa).

NAD(+) is bound by residues Asp-60–Lys-65, Gly-94–Asp-98, Thr-118–Thr-119, Lys-131, Lys-140, and Phe-158–Thr-161. Glu-173, His-239, and His-256 together coordinate Zn(2+).

Belongs to the sugar phosphate cyclases superfamily. Dehydroquinate synthase family. It depends on NAD(+) as a cofactor. Co(2+) is required as a cofactor. The cofactor is Zn(2+).

The protein localises to the cytoplasm. It catalyses the reaction 7-phospho-2-dehydro-3-deoxy-D-arabino-heptonate = 3-dehydroquinate + phosphate. It functions in the pathway metabolic intermediate biosynthesis; chorismate biosynthesis; chorismate from D-erythrose 4-phosphate and phosphoenolpyruvate: step 2/7. Catalyzes the conversion of 3-deoxy-D-arabino-heptulosonate 7-phosphate (DAHP) to dehydroquinate (DHQ). This is 3-dehydroquinate synthase from Campylobacter jejuni subsp. jejuni serotype O:2 (strain ATCC 700819 / NCTC 11168).